The sequence spans 92 residues: Small ribosomal subunit protein uS19 (92 aa).

This sequence belongs to the universal ribosomal protein uS19 family.

In terms of biological role, protein S19 forms a complex with S13 that binds strongly to the 16S ribosomal RNA. In Bifidobacterium longum subsp. infantis (strain ATCC 15697 / DSM 20088 / JCM 1222 / NCTC 11817 / S12), this protein is Small ribosomal subunit protein uS19.